A 167-amino-acid polypeptide reads, in one-letter code: Lipoprotein signal peptidase (167 aa).

Transmembrane regions (helical) follow at residues T8–L28, W46–F66, K70–I90, and I101–G121. Active-site residues include D125 and D143. The chain crosses the membrane as a helical span at residues F139–F159.

The protein belongs to the peptidase A8 family.

Its subcellular location is the cell inner membrane. It catalyses the reaction Release of signal peptides from bacterial membrane prolipoproteins. Hydrolyzes -Xaa-Yaa-Zaa-|-(S,diacylglyceryl)Cys-, in which Xaa is hydrophobic (preferably Leu), and Yaa (Ala or Ser) and Zaa (Gly or Ala) have small, neutral side chains.. The protein operates within protein modification; lipoprotein biosynthesis (signal peptide cleavage). Functionally, this protein specifically catalyzes the removal of signal peptides from prolipoproteins. The polypeptide is Lipoprotein signal peptidase (Chlamydia muridarum (strain MoPn / Nigg)).